Consider the following 335-residue polypeptide: 2-acylglycerol O-acyltransferase 2-B (335 aa).

2 helical membrane-spanning segments follow: residues 24–44 (WAVS…LLLF) and 104–124 (YIMG…NFCT). N-linked (GlcNAc...) asparagine glycosylation occurs at N206.

Belongs to the diacylglycerol acyltransferase family.

It localises to the endoplasmic reticulum membrane. The protein localises to the cytoplasm. The protein resides in the perinuclear region. The enzyme catalyses a 2-acylglycerol + an acyl-CoA = a 1,2-diacylglycerol + CoA. It carries out the reaction a 2-acylglycerol + an acyl-CoA = a 1,2-diacyl-sn-glycerol + CoA. The catalysed reaction is a 2-acylglycerol + an acyl-CoA = a 2,3-diacyl-sn-glycerol + CoA. It catalyses the reaction a 1-acylglycerol + an acyl-CoA = a 1,2-diacylglycerol + CoA. The enzyme catalyses a 1-acylglycerol + an acyl-CoA = a 1,3-diacylglycerol + CoA. It carries out the reaction 1-O-alkylglycerol + an acyl-CoA = 1-O-alkyl-3-acylglycerol + CoA. The catalysed reaction is an acyl-CoA + a 1,2-diacyl-sn-glycerol = a triacyl-sn-glycerol + CoA. Its pathway is glycerolipid metabolism; triacylglycerol biosynthesis. In terms of biological role, catalyzes the formation of diacylglycerol from 2-monoacylglycerol and fatty acyl-CoA. Its function is as follows. Involved in glycerolipid synthesis and lipid metabolism. Catalyzes the formation of diacylglycerol, the precursor of triacylglycerol, by transferring the acyl chain of a fatty acyl-CoA to a monoacylglycerol. Plays a central role in absorption of dietary fat in the small intestine by catalyzing the resynthesis of triacylglycerol in enterocytes. Has a preference toward monoacylglycerols containing unsaturated fatty acids in an order of C18:3 &gt; C18:2 &gt; C18:1 &gt; C18:0 at sn-2. Able to use 1-monoalkylglycerol (1-MAkG, 1-O-alkylglycerol) as an acyl acceptor for the synthesis of monoalkyl-monoacylglycerol (MAMAG, 1-O-alkyl-3-acylglycerol or 1-O-alkyl-2-acylglycerol) and subsequently, with lower efficiency, may add another acyl chain producing monoalkyl-diacylglycerol (MADAG, 1-O-alkyl-2,3-diacylglycerol). Possesses weak but significant activity with diacylglycerol as substrate, producing triacylglycerol (triacyl-sn-glycerol). This is 2-acylglycerol O-acyltransferase 2-B (mogat2-b) from Xenopus laevis (African clawed frog).